A 1031-amino-acid chain; its full sequence is Translation initiation factor IF-2 (1031 aa).

2 disordered regions span residues 33–369 and 388–436; these read KSHS…GDVL and LKPL…AESL. Positions 45-56 are enriched in basic and acidic residues; it reads ELVRSKLSEPRV. Residues 96–105 show a composition bias toward low complexity; the sequence is PAPAQQQAAA. Positions 108-123 are enriched in polar residues; the sequence is ASSSKPSPQRPDQLSS. The segment covering 148 to 171 has biased composition (low complexity); that stretch reads PAAQEPQPAAASTRPEAAAKAGSP. Residues 184-200 show a composition bias toward pro residues; it reads VLPPPRRAASGPEPPQR. The span at 250–281 shows a compositional bias: basic and acidic residues; that stretch reads TRPEPRSPVAKKEESSDSGKADEAPRPQRRLE. The span at 286–299 shows a compositional bias: pro residues; that stretch reads PTRPVAKPLPPEPD. Over residues 419–435 the composition is skewed to low complexity; the sequence is RPSASAEATAPEAAAES. The region spanning 522–695 is the tr-type G domain; the sequence is PRPPVVTIMG…LLVADVAELQ (174 aa). The segment at 531–538 is G1; it reads GHVDHGKT. 531–538 serves as a coordination point for GTP; it reads GHVDHGKT. Residues 556–560 form a G2 region; it reads GITQR. The segment at 581-584 is G3; that stretch reads DTPG. Residues 581–585 and 635–638 each bind GTP; these read DTPGH and NKID. Positions 635–638 are G4; it reads NKID. The interval 671–673 is G5; the sequence is SAL.

The protein belongs to the TRAFAC class translation factor GTPase superfamily. Classic translation factor GTPase family. IF-2 subfamily.

Its subcellular location is the cytoplasm. One of the essential components for the initiation of protein synthesis. Protects formylmethionyl-tRNA from spontaneous hydrolysis and promotes its binding to the 30S ribosomal subunits. Also involved in the hydrolysis of GTP during the formation of the 70S ribosomal complex. This Synechococcus sp. (strain JA-3-3Ab) (Cyanobacteria bacterium Yellowstone A-Prime) protein is Translation initiation factor IF-2.